Reading from the N-terminus, the 759-residue chain is Pseudocleavage protein nop-1 (759 aa).

5 disordered regions span residues Met-1–Phe-46, Lys-334–Lys-361, Leu-379–Gln-413, Gln-440–Arg-495, and Glu-732–Ile-759. Residues Asp-10–Arg-42 show a composition bias toward basic and acidic residues. Positions Thr-448–Ser-465 are enriched in low complexity. The segment covering Gly-473–Arg-482 has biased composition (polar residues). Residues Ser-485–Arg-495 show a composition bias toward basic and acidic residues. Positions Pro-736–Ile-759 are enriched in polar residues.

It is found in the nucleus. The protein resides in the cytoplasm. It localises to the cell cortex. The protein localises to the cleavage furrow. Functionally, required for formation of the pseudocleavage furrow during the first cleavage of the embryo and also mediates aster-induced furrowing during cytokinesis. Promotes cortical recruitment of ani-1 and nmy-2 during pseudocleavage and cytokinesis and promotes the accumulation of actin at furrowing regions. Regulates establishment of embryonic cell polarity. The sequence is that of Pseudocleavage protein nop-1 (nop-1) from Caenorhabditis elegans.